Here is a 309-residue protein sequence, read N- to C-terminus: Metal ABC transporter substrate-binding lipoprotein FimA (309 aa).

An N-terminal signal peptide occupies residues 1-20 (MKKIASVLALFVALLFGLLA). A lipid anchor (N-palmitoyl cysteine) is attached at C21. A lipid anchor (S-diacylglycerol cysteine) is attached at C21. Positions 67, 139, 205, and 280 each coordinate a divalent metal cation.

Belongs to the bacterial solute-binding protein 9 family. Lipoprotein receptor antigen (Lrai) subfamily.

The protein localises to the cell membrane. Part of an ATP-binding cassette (ABC) transport system involved in metal import. Binds a metal with high affinity and specificity and delivers it to the membrane permease for translocation into the cytoplasm. Also acts as an adhesin which is involved on adherence to extracellular matrix. It is an important factor in pathogenesis and infection. May contribute to the formation and accumulation of dental plaque. The sequence is that of Metal ABC transporter substrate-binding lipoprotein FimA (fimA) from Streptococcus parasanguinis.